A 316-amino-acid polypeptide reads, in one-letter code: Probable cell division protein WhiA (316 aa).

A DNA-binding region (H-T-H motif) is located at residues 275–309; that stretch reads TLKELGEMVSSGKISKSGINHRLRKLDEIAEQLRS.

The protein belongs to the WhiA family.

Its function is as follows. Involved in cell division and chromosome segregation. The protein is Probable cell division protein WhiA of Bacillus licheniformis (strain ATCC 14580 / DSM 13 / JCM 2505 / CCUG 7422 / NBRC 12200 / NCIMB 9375 / NCTC 10341 / NRRL NRS-1264 / Gibson 46).